A 4486-amino-acid chain; its full sequence is Dynein axonemal heavy chain 9 (4486 aa).

A stem region spans residues Met-1–Leu-1831. 5 coiled-coil regions span residues Asp-381 to Asp-410, Gln-504 to Ile-529, Ala-639 to Leu-662, Thr-752 to Thr-823, and Asn-1326 to Ala-1355. AAA regions lie at residues Tyr-1832–Val-2053, Ala-2113–Lys-2334, Glu-2440–Gly-2688, and Asn-2787–Tyr-3036. Residues Gly-1870–Thr-1877, Gly-2151–Ser-2158, Gly-2478–Ser-2485, and Gly-2825–Gln-2832 each bind ATP. Coiled coils occupy residues Tyr-3051–Glu-3154, Lys-3285–Thr-3341, and Leu-3640–Tyr-3675. Residues Tyr-3051–Thr-3341 form a stalk region. 2 AAA regions span residues Leu-3429–Lys-3656 and Leu-3866–Asn-4092.

It belongs to the dynein heavy chain family. As to quaternary structure, consists of at least two heavy chains and a number of intermediate and light chains. Interacts with ODAD1. As to expression, expressed in upper and lower respiratory airway epithelia (at protein level). Not detected in spermatozoa (at protein level).

Its subcellular location is the cytoplasm. It localises to the cytoskeleton. The protein localises to the cilium axoneme. Its function is as follows. Force generating protein required for cilia beating in respiratory epithelia. Produces force towards the minus ends of microtubules. Dynein has ATPase activity; the force-producing power stroke is thought to occur on release of ADP. The chain is Dynein axonemal heavy chain 9 from Homo sapiens (Human).